The sequence spans 427 residues: Inward rectifier potassium channel 2 (427 aa).

The Cytoplasmic portion of the chain corresponds to 1–81 (MGSVRTNRYS…IFTTCVDIRW (81 aa)). Cys-76 carries the post-translational modification S-nitrosocysteine. A helical transmembrane segment spans residues 82 to 106 (RWMLVIFCLAFVLSWLFFGCVFWLI). Topologically, residues 107-128 (ALLHGDLDASKEGKACVSEVNS) are extracellular. Residues 129 to 140 (FTAAFLFSIETQ) constitute an intramembrane region (helical; Pore-forming). An intramembrane region (pore-forming) is located at residues 141–147 (TTIGYGF). Residues 142-147 (TIGYGF) carry the Selectivity filter motif. Residues 148–156 (RCVTDECPI) are Extracellular-facing. The helical transmembrane segment at 157-178 (AVFMVVFQSIVGCIIDAFIIGA) threads the bilayer. Over 179–427 (VMAKMAKPKK…PRPLRRESEI (249 aa)) the chain is Cytoplasmic. The tract at residues 181–208 (AKMAKPKKRNETLVFSHNAVIAMRDGKL) is polyphosphoinositide (PIP2)-binding. Positions 384 to 427 (SKEEDDSENGVPESTSTDTPPDIDLHNQASVPLEPRPLRRESEI) are disordered. The PDZ-binding motif lies at 425-427 (SEI).

The protein belongs to the inward rectifier-type potassium channel (TC 1.A.2.1) family. KCNJ2 subfamily. Homotetramer. Homomultimeric and heteromultimeric association with KCNJ4/Kir2.3. Can form heteromeric channels with Kir2.6/KCNJ18. Associates, via its PDZ-recognition domain, with a complex containing LIN7A, LIN7B, LIN7C, DLG1, CASK and APBA1. In terms of processing, S-nitrosylation increases the open probability and inward rectifying currents.

The protein resides in the cell membrane. It is found in the sarcolemma. Its subcellular location is the T-tubule. The catalysed reaction is K(+)(in) = K(+)(out). Its activity is regulated as follows. Activated by phosphatidylinositol 4,5 biphosphate (PtdIns(4,5)P2). Its function is as follows. Inward rectifier potassium channels are characterized by a greater tendency to allow potassium to flow into the cell rather than out of it. Their voltage dependence is regulated by the concentration of extracellular potassium; as external potassium is raised, the voltage range of the channel opening shifts to more positive voltages. The inward rectification is mainly due to the blockage of outward current by internal magnesium. Can be blocked by extracellular barium or cesium. Probably participates in establishing action potential waveform and excitability of neuronal and muscle tissues. This is Inward rectifier potassium channel 2 (KCNJ2) from Macaca mulatta (Rhesus macaque).